Reading from the N-terminus, the 34-residue chain is Photosystem II reaction center protein M (34 aa).

The helical transmembrane segment at isoleucine 5–isoleucine 25 threads the bilayer.

Belongs to the PsbM family. In terms of assembly, PSII is composed of 1 copy each of membrane proteins PsbA, PsbB, PsbC, PsbD, PsbE, PsbF, PsbH, PsbI, PsbJ, PsbK, PsbL, PsbM, PsbT, PsbX, PsbY, PsbZ, Psb30/Ycf12, at least 3 peripheral proteins of the oxygen-evolving complex and a large number of cofactors. It forms dimeric complexes.

Its subcellular location is the plastid. The protein resides in the chloroplast thylakoid membrane. Its function is as follows. One of the components of the core complex of photosystem II (PSII). PSII is a light-driven water:plastoquinone oxidoreductase that uses light energy to abstract electrons from H(2)O, generating O(2) and a proton gradient subsequently used for ATP formation. It consists of a core antenna complex that captures photons, and an electron transfer chain that converts photonic excitation into a charge separation. This subunit is found at the monomer-monomer interface. The sequence is that of Photosystem II reaction center protein M from Ceratophyllum demersum (Rigid hornwort).